We begin with the raw amino-acid sequence, 162 residues long: Troponin C, skeletal muscle (162 aa).

EF-hand domains follow at residues 17-52 (EMIA…LGQN), 53-88 (PTKE…QMKE), 93-128 (KSEE…TGEH), and 129-162 (VTEE…EGVQ). Residues D30, D32, D36, E41, D66, D68, S70, T72, E77, D106, N108, D110, E117, D142, N144, D146, R148, and E153 each contribute to the Ca(2+) site.

The protein belongs to the troponin C family.

Its function is as follows. Troponin is the central regulatory protein of striated muscle contraction. Tn consists of three components: Tn-I which is the inhibitor of actomyosin ATPase, Tn-T which contains the binding site for tropomyosin and Tn-C. The binding of calcium to Tn-C abolishes the inhibitory action of Tn on actin filaments. The sequence is that of Troponin C, skeletal muscle (TNNC2) from Meleagris gallopavo (Wild turkey).